Consider the following 719-residue polypeptide: DNA replication licensing factor MCM7 (719 aa).

An N-acetylalanine modification is found at Ala-2. Glycyl lysine isopeptide (Lys-Gly) (interchain with G-Cter in SUMO2) cross-links involve residues Lys-15 and Lys-28. Residue Ser-314 is modified to Phosphoserine. The region spanning 332–538 is the MCM domain; that stretch reads FYEKLAASIA…NDLRLAQHIT (207 aa). Tyr-345 provides a ligand contact to ATP. Position 365 is a phosphoserine (Ser-365). ATP is bound by residues Gly-384, Ala-386, Lys-387, Ser-388, and Asn-489. Ser-500 is subject to Phosphoserine. The Arginine finger motif lies at 513–516; that stretch reads SRFD. Arg-514 is an ATP binding site. The segment at 521-564 is interaction with RAD17; that stretch reads IQDRPDRDNDLRLAQHITYVHQHSRQPPAQFEPLDMKLMRRYIA. Residues 577-719 form an interaction with ATRIP region; it reads LADYITAAYV…NTSRTRITFV (143 aa). Residue Arg-604 participates in ATP binding. Ser-678 bears the Phosphoserine mark.

The protein belongs to the MCM family. In terms of assembly, component of the MCM2-7 complex. The complex forms a toroidal hexameric ring with the proposed subunit order MCM2-MCM6-MCM4-MCM7-MCM3-MCM5. Component of the CMG helicase complex, a hexameric ring of related MCM2-7 subunits stabilized by CDC45 and the tetrameric GINS complex. Interacts with the ATR-ATRIP complex and with RAD17. Interacts with TIPIN. Interacts with MCMBP. Interacts with ANKRD17. Component of the replisome complex composed of at least DONSON, MCM2, MCM7, PCNA and TICRR. In terms of processing, O-glycosylated (O-GlcNAcylated), in a cell cycle-dependent manner. Ubiquitinated by ECS(LRR1) E3 ubiquitin-protein ligase complex when forks converge following formation of DNA interstrand cross-links. During mitosis, ubiquitinated by TRAIP when forks converge following formation of DNA interstrand cross-links. Short ubiquitin chains on MCM7 promote recruitment of DNA glycosylase NEIL3. If the interstrand cross-link cannot be cleaved by NEIL3, the ubiquitin chains continue to grow on MCM7, promoting the unloading of the CMG helicase complex by the VCP/p97 ATPase.

The protein resides in the nucleus. It is found in the chromosome. It catalyses the reaction ATP + H2O = ADP + phosphate + H(+). Functionally, acts as a component of the MCM2-7 complex (MCM complex) which is the replicative helicase essential for 'once per cell cycle' DNA replication initiation and elongation in eukaryotic cells. Core component of CDC45-MCM-GINS (CMG) helicase, the molecular machine that unwinds template DNA during replication, and around which the replisome is built. The active ATPase sites in the MCM2-7 ring are formed through the interaction surfaces of two neighboring subunits such that a critical structure of a conserved arginine finger motif is provided in trans relative to the ATP-binding site of the Walker A box of the adjacent subunit. The six ATPase active sites, however, are likely to contribute differentially to the complex helicase activity. Uncomplexed form does not show ATPase or DNA helicase. Required for S-phase checkpoint activation upon UV-induced damage. This Mus musculus (Mouse) protein is DNA replication licensing factor MCM7 (Mcm7).